We begin with the raw amino-acid sequence, 390 residues long: Zinc transporter 7-B (390 aa).

Residues 1–37 (MLPLSIKDDEYKPPKFNLVRKVSGWIRSIFSDSTSRN) lie on the Cytoplasmic side of the membrane. Residues 38-58 (LFCFLCLNLSFAFVELFYGIW) traverse the membrane as a helical segment. At 59–67 (SNSLGLISD) the chain is on the lumenal side. Residues 68–88 (SFHMFFDCTALLAGLAASVIS) traverse the membrane as a helical segment. Over 89-102 (RWKTNETFSYGYVR) the chain is Cytoplasmic. A helical membrane pass occupies residues 103-123 (AEVLAGFVNGLFLIFTAFFIF). The Lumenal portion of the chain corresponds to 124 to 140 (SEGIERALDTPEVHHER). A helical transmembrane segment spans residues 141–161 (LLPVSIMGFLVNLIGIFVFQH). Residues 161–226 (HGGGHGHSHE…GHDHSHKHGH (66 aa)) are his-rich loop. Residues 162-250 (GGGHGHSHES…KGSSKQILEG (89 aa)) are Cytoplasmic-facing. The segment at 166–243 (GHSHESGHGH…DEPPEENKGS (78 aa)) is disordered. Residues 187 to 201 (GHSHSHGGGHGHSHG) show a composition bias toward basic residues. Composition is skewed to basic and acidic residues over residues 202–218 (GGHE…EHGH) and 232–242 (CHDEPPEENKG). Residues 251 to 271 (VFLHIVADALGSVGVIISTIL) form a helical membrane-spanning segment. Over 272 to 276 (MQQYG) the chain is Lumenal. The chain crosses the membrane as a helical span at residues 277–297 (LMIADPICSMLIALLIFVSVI). At 298 to 390 (PLLKQSIGIL…LYVQIDLAAM (93 aa)) the chain is on the cytoplasmic side.

It belongs to the cation diffusion facilitator (CDF) transporter (TC 2.A.4) family. SLC30A subfamily. As to quaternary structure, homooligomer.

It is found in the golgi apparatus membrane. The protein localises to the cytoplasmic vesicle. Its subcellular location is the golgi apparatus. The protein resides in the trans-Golgi network. It localises to the sarcoplasmic reticulum. It is found in the mitochondrion. It catalyses the reaction Zn(2+)(in) = Zn(2+)(out). In terms of biological role, zinc ion transporter mediating zinc entry from the cytosol into the lumen of organelles along the secretory pathway. By contributing to zinc ion homeostasis within the early secretory pathway, regulates the activation and folding of enzymes like alkaline phosphatases. The polypeptide is Zinc transporter 7-B (slc30a7-b) (Xenopus laevis (African clawed frog)).